The following is a 316-amino-acid chain: Acetaldehyde dehydrogenase 1 (316 aa).

12–15 (SGNI) is an NAD(+) binding site. Cysteine 132 acts as the Acyl-thioester intermediate in catalysis. Residues 163–171 (SAGPGTRAN) and asparagine 291 contribute to the NAD(+) site.

This sequence belongs to the acetaldehyde dehydrogenase family.

The enzyme catalyses acetaldehyde + NAD(+) + CoA = acetyl-CoA + NADH + H(+). This is Acetaldehyde dehydrogenase 1 from Pseudomonas putida (strain ATCC 700007 / DSM 6899 / JCM 31910 / BCRC 17059 / LMG 24140 / F1).